We begin with the raw amino-acid sequence, 38 residues long: Photosystem II reaction center protein L (38 aa).

A helical membrane pass occupies residues 17–37; it reads SLYWGLLLIFVLAVLFSSYIF.

This sequence belongs to the PsbL family. In terms of assembly, PSII is composed of 1 copy each of membrane proteins PsbA, PsbB, PsbC, PsbD, PsbE, PsbF, PsbH, PsbI, PsbJ, PsbK, PsbL, PsbM, PsbT, PsbY, PsbZ, Psb30/Ycf12, at least 3 peripheral proteins of the oxygen-evolving complex and a large number of cofactors. It forms dimeric complexes.

It is found in the plastid. It localises to the chloroplast thylakoid membrane. Functionally, one of the components of the core complex of photosystem II (PSII). PSII is a light-driven water:plastoquinone oxidoreductase that uses light energy to abstract electrons from H(2)O, generating O(2) and a proton gradient subsequently used for ATP formation. It consists of a core antenna complex that captures photons, and an electron transfer chain that converts photonic excitation into a charge separation. This subunit is found at the monomer-monomer interface and is required for correct PSII assembly and/or dimerization. This Euglena gracilis protein is Photosystem II reaction center protein L.